Here is a 151-residue protein sequence, read N- to C-terminus: Small ribosomal subunit protein uS15 (151 aa).

The protein belongs to the universal ribosomal protein uS15 family. In terms of assembly, component of the small ribosomal subunit.

The protein resides in the cytoplasm. In terms of biological role, component of the small ribosomal subunit. The ribosome is a large ribonucleoprotein complex responsible for the synthesis of proteins in the cell. The polypeptide is Small ribosomal subunit protein uS15 (rps13) (Gillichthys mirabilis (Long-jawed mudsucker)).